The following is a 287-amino-acid chain: Acetylglutamate kinase (287 aa).

Residues 64 to 65, Arg86, and Asn181 each bind substrate; that span reads GG.

It belongs to the acetylglutamate kinase family. ArgB subfamily.

It localises to the cytoplasm. It catalyses the reaction N-acetyl-L-glutamate + ATP = N-acetyl-L-glutamyl 5-phosphate + ADP. It participates in amino-acid biosynthesis; L-arginine biosynthesis; N(2)-acetyl-L-ornithine from L-glutamate: step 2/4. Functionally, catalyzes the ATP-dependent phosphorylation of N-acetyl-L-glutamate. This chain is Acetylglutamate kinase, found in Desulforamulus reducens (strain ATCC BAA-1160 / DSM 100696 / MI-1) (Desulfotomaculum reducens).